Here is a 119-residue protein sequence, read N- to C-terminus: Large ribosomal subunit protein uL22 (119 aa).

Belongs to the universal ribosomal protein uL22 family. As to quaternary structure, part of the 50S ribosomal subunit.

This protein binds specifically to 23S rRNA; its binding is stimulated by other ribosomal proteins, e.g. L4, L17, and L20. It is important during the early stages of 50S assembly. It makes multiple contacts with different domains of the 23S rRNA in the assembled 50S subunit and ribosome. In terms of biological role, the globular domain of the protein is located near the polypeptide exit tunnel on the outside of the subunit, while an extended beta-hairpin is found that lines the wall of the exit tunnel in the center of the 70S ribosome. This is Large ribosomal subunit protein uL22 from Rickettsia bellii (strain OSU 85-389).